A 207-amino-acid chain; its full sequence is Guanylate kinase (207 aa).

In terms of domain architecture, Guanylate kinase-like spans 6-185 (GLLIVLSGPS…AKNRIQSIVE (180 aa)). Residue 13 to 20 (GPSGVGKG) coordinates ATP.

It belongs to the guanylate kinase family.

Its subcellular location is the cytoplasm. It catalyses the reaction GMP + ATP = GDP + ADP. In terms of biological role, essential for recycling GMP and indirectly, cGMP. The sequence is that of Guanylate kinase from Staphylococcus epidermidis (strain ATCC 35984 / DSM 28319 / BCRC 17069 / CCUG 31568 / BM 3577 / RP62A).